Here is a 29-residue protein sequence, read N- to C-terminus: Dermaseptin-J5 (29 aa).

Valine amide is present on Val-29.

As to expression, expressed by the skin glands.

Its subcellular location is the secreted. Has antimicrobial activity. The polypeptide is Dermaseptin-J5 (Phasmahyla jandaia (Jandaia leaf frog)).